We begin with the raw amino-acid sequence, 329 residues long: Diaminopimelate epimerase (329 aa).

Positions 14 and 73 each coordinate substrate. The Proton donor role is filled by C82. Substrate-binding positions include 83–84, N170, N206, and 224–225; these read GN and ER. The active-site Proton acceptor is C233. 234 to 235 provides a ligand contact to substrate; it reads GT.

It belongs to the diaminopimelate epimerase family. In terms of assembly, homodimer.

It is found in the cytoplasm. The catalysed reaction is (2S,6S)-2,6-diaminopimelate = meso-2,6-diaminopimelate. It functions in the pathway amino-acid biosynthesis; L-lysine biosynthesis via DAP pathway; DL-2,6-diaminopimelate from LL-2,6-diaminopimelate: step 1/1. Its function is as follows. Catalyzes the stereoinversion of LL-2,6-diaminopimelate (L,L-DAP) to meso-diaminopimelate (meso-DAP), a precursor of L-lysine and an essential component of the bacterial peptidoglycan. This Listeria monocytogenes serotype 4b (strain F2365) protein is Diaminopimelate epimerase.